The chain runs to 508 residues: Putative adenosylhomocysteinase 3 (508 aa).

Residue Ser4 is modified to Phosphoserine. Residues Asp24–Ser81 form a disordered region. Positions Arg32–Leu41 are enriched in basic residues. Low complexity predominate over residues Ser42–Asp61. Residues Ser46, Ser49, Ser52, and Ser55 each carry the phosphoserine modification. Substrate is bound by residues Thr133, Asp207, and Glu232. Residue Ser233–Thr235 coordinates NAD(+). 2 residues coordinate substrate: Lys262 and Asp266. NAD(+)-binding positions include Asn267, Gly298–Gly303, Glu319, Asn354, Ile375–His377, and Asn422.

It belongs to the adenosylhomocysteinase family. Homotetramer. Forms heteromultimers with AHCYL1 (via the C-terminal region). Interacts with ITPR1; with lower affinity than AHCYL1 and maybe via ITPR1. Interacts with SLC4A4. Interacts with ZCCHC4. Requires NAD(+) as cofactor.

The protein resides in the cytoplasm. Its subcellular location is the microsome. The enzyme catalyses S-adenosyl-L-homocysteine + H2O = L-homocysteine + adenosine. The protein operates within amino-acid biosynthesis; L-homocysteine biosynthesis; L-homocysteine from S-adenosyl-L-homocysteine: step 1/1. Its function is as follows. May regulate the electrogenic sodium/bicarbonate cotransporter SLC4A4 activity and Mg(2+)-sensitivity. On the contrary of its homolog AHCYL1, does not regulate ITPR1 sensitivity to inositol 1,4,5-trisphosphate. This Pongo abelii (Sumatran orangutan) protein is Putative adenosylhomocysteinase 3 (AHCYL2).